A 38-amino-acid chain; its full sequence is Cytochrome b559 subunit beta (38 aa).

Residues 13 to 29 (WLAVHALAVPTVFFLGS) form a helical membrane-spanning segment. Histidine 17 serves as a coordination point for heme.

Belongs to the PsbE/PsbF family. Heterodimer of an alpha subunit and a beta subunit. PSII is composed of 1 copy each of membrane proteins PsbA, PsbB, PsbC, PsbD, PsbE, PsbF, PsbH, PsbI, PsbJ, PsbK, PsbL, PsbM, PsbT, PsbX, PsbY, PsbZ, Psb30/Ycf12, at least 3 peripheral proteins of the oxygen-evolving complex and a large number of cofactors. It forms dimeric complexes. Requires heme b as cofactor.

The protein localises to the plastid. Its subcellular location is the chloroplast thylakoid membrane. Functionally, this b-type cytochrome is tightly associated with the reaction center of photosystem II (PSII). PSII is a light-driven water:plastoquinone oxidoreductase that uses light energy to abstract electrons from H(2)O, generating O(2) and a proton gradient subsequently used for ATP formation. It consists of a core antenna complex that captures photons, and an electron transfer chain that converts photonic excitation into a charge separation. The chain is Cytochrome b559 subunit beta from Ostreococcus tauri.